An 815-amino-acid chain; its full sequence is (E)-gamma-bisabolene synthase (815 aa).

The Mg(2+) site is built by Asp-561, Asp-565, Asp-709, and Glu-717. The DDXXD motif motif lies at 561 to 565; the sequence is DDMYD.

It belongs to the terpene synthase family. Tpsd subfamily. Requires Mg(2+) as cofactor. The cofactor is Mn(2+).

It localises to the cytoplasm. The enzyme catalyses (2E,6E)-farnesyl diphosphate = (E)-gamma-bisabolene + diphosphate. It functions in the pathway terpene metabolism; oleoresin biosynthesis. Functionally, involved in defensive oleoresin formation in conifers in response to insect attack or other injury. Involved in sesquiterpene (C15) olefins biosynthesis. Produces mainly (E)-gamma-bisabolene when used with farnesyl diphosphate as substrate. No activity with geranyl diphosphate or geranylgeranyl diphosphate. In Pseudotsuga menziesii (Douglas-fir), this protein is (E)-gamma-bisabolene synthase (TPS3).